A 124-amino-acid polypeptide reads, in one-letter code: Small ribosomal subunit protein uS12 (124 aa).

A disordered region spans residues 1–20; sequence MATISQLVRNPRKDKVQKTS. 3-methylthioaspartic acid is present on Asp89. Positions 104–124 are disordered; that stretch reads TSGVTARRKGRSKYGAKRPKA. A compositionally biased stretch (basic residues) spans 109 to 124; it reads ARRKGRSKYGAKRPKA.

It belongs to the universal ribosomal protein uS12 family. As to quaternary structure, part of the 30S ribosomal subunit. Contacts proteins S8 and S17. May interact with IF1 in the 30S initiation complex.

Functionally, with S4 and S5 plays an important role in translational accuracy. In terms of biological role, interacts with and stabilizes bases of the 16S rRNA that are involved in tRNA selection in the A site and with the mRNA backbone. Located at the interface of the 30S and 50S subunits, it traverses the body of the 30S subunit contacting proteins on the other side and probably holding the rRNA structure together. The combined cluster of proteins S8, S12 and S17 appears to hold together the shoulder and platform of the 30S subunit. The sequence is that of Small ribosomal subunit protein uS12 from Psychromonas ingrahamii (strain DSM 17664 / CCUG 51855 / 37).